The primary structure comprises 769 residues: Glutathione biosynthesis bifunctional protein GshAB (769 aa).

A glutamate--cysteine ligase region spans residues 1-347; that stretch reads MLDSFKEDPK…QLADENENNI (347 aa). An ATP-grasp domain is found at 514–768; it reads KLVLAEHDIR…IGDKILDFLF (255 aa). 541 to 599 is an ATP binding site; the sequence is SLFEDKQIVVKPKSTNYGWGISIFKNKFTLEDYQEALNIAFSYDSSVIIEEFIPGDEFR. Mg(2+) is bound by residues Asp721, Glu738, and Asn740. Mn(2+) is bound by residues Asp721, Glu738, and Asn740.

This sequence in the N-terminal section; belongs to the glutamate--cysteine ligase type 1 family. Type 2 subfamily. Monomer. Requires Mg(2+) as cofactor. Mn(2+) is required as a cofactor.

The catalysed reaction is L-cysteine + L-glutamate + ATP = gamma-L-glutamyl-L-cysteine + ADP + phosphate + H(+). The enzyme catalyses gamma-L-glutamyl-L-cysteine + glycine + ATP = glutathione + ADP + phosphate + H(+). It participates in sulfur metabolism; glutathione biosynthesis; glutathione from L-cysteine and L-glutamate: step 1/2. Its pathway is sulfur metabolism; glutathione biosynthesis; glutathione from L-cysteine and L-glutamate: step 2/2. In terms of biological role, synthesizes glutathione from L-glutamate and L-cysteine via gamma-L-glutamyl-L-cysteine. This Listeria monocytogenes serotype 4b (strain F2365) protein is Glutathione biosynthesis bifunctional protein GshAB.